An 81-amino-acid polypeptide reads, in one-letter code: uncharacterized protein (81 aa).

This is an uncharacterized protein from Sulfolobus islandicus filamentous virus (isolate Iceland/Hveragerdi) (SIFV).